The sequence spans 420 residues: Histidine--tRNA ligase (420 aa).

Belongs to the class-II aminoacyl-tRNA synthetase family. In terms of assembly, homodimer.

It is found in the cytoplasm. The enzyme catalyses tRNA(His) + L-histidine + ATP = L-histidyl-tRNA(His) + AMP + diphosphate + H(+). The polypeptide is Histidine--tRNA ligase (Streptomyces avermitilis (strain ATCC 31267 / DSM 46492 / JCM 5070 / NBRC 14893 / NCIMB 12804 / NRRL 8165 / MA-4680)).